The sequence spans 426 residues: Enolase (426 aa).

A (2R)-2-phosphoglycerate-binding site is contributed by Gln-163. Glu-205 functions as the Proton donor in the catalytic mechanism. 3 residues coordinate Mg(2+): Asp-242, Glu-285, and Asp-312. Lys-337, Arg-366, Ser-367, and Lys-388 together coordinate (2R)-2-phosphoglycerate. Lys-337 functions as the Proton acceptor in the catalytic mechanism.

It belongs to the enolase family. It depends on Mg(2+) as a cofactor.

It is found in the cytoplasm. It localises to the secreted. The protein localises to the cell surface. The enzyme catalyses (2R)-2-phosphoglycerate = phosphoenolpyruvate + H2O. The protein operates within carbohydrate degradation; glycolysis; pyruvate from D-glyceraldehyde 3-phosphate: step 4/5. Catalyzes the reversible conversion of 2-phosphoglycerate (2-PG) into phosphoenolpyruvate (PEP). It is essential for the degradation of carbohydrates via glycolysis. The protein is Enolase of Caulobacter vibrioides (strain ATCC 19089 / CIP 103742 / CB 15) (Caulobacter crescentus).